Reading from the N-terminus, the 209-residue chain is Uracil phosphoribosyltransferase (209 aa).

5-phospho-alpha-D-ribose 1-diphosphate-binding positions include Arg79, Arg104, and 131 to 139 (DPMLATGGS). Residues Ile194 and 199–201 (GDA) contribute to the uracil site. Position 200 (Asp200) interacts with 5-phospho-alpha-D-ribose 1-diphosphate.

It belongs to the UPRTase family. Requires Mg(2+) as cofactor.

It carries out the reaction UMP + diphosphate = 5-phospho-alpha-D-ribose 1-diphosphate + uracil. It functions in the pathway pyrimidine metabolism; UMP biosynthesis via salvage pathway; UMP from uracil: step 1/1. Its activity is regulated as follows. Allosterically activated by GTP. Catalyzes the conversion of uracil and 5-phospho-alpha-D-ribose 1-diphosphate (PRPP) to UMP and diphosphate. In Streptococcus suis (strain 05ZYH33), this protein is Uracil phosphoribosyltransferase.